We begin with the raw amino-acid sequence, 556 residues long: 2-succinyl-5-enolpyruvyl-6-hydroxy-3-cyclohexene-1-carboxylate synthase (556 aa).

This sequence belongs to the TPP enzyme family. MenD subfamily. As to quaternary structure, homodimer. The cofactor is Mg(2+). Mn(2+) serves as cofactor. It depends on thiamine diphosphate as a cofactor.

It catalyses the reaction isochorismate + 2-oxoglutarate + H(+) = 5-enolpyruvoyl-6-hydroxy-2-succinyl-cyclohex-3-ene-1-carboxylate + CO2. Its pathway is quinol/quinone metabolism; 1,4-dihydroxy-2-naphthoate biosynthesis; 1,4-dihydroxy-2-naphthoate from chorismate: step 2/7. It participates in quinol/quinone metabolism; menaquinone biosynthesis. Catalyzes the thiamine diphosphate-dependent decarboxylation of 2-oxoglutarate and the subsequent addition of the resulting succinic semialdehyde-thiamine pyrophosphate anion to isochorismate to yield 2-succinyl-5-enolpyruvyl-6-hydroxy-3-cyclohexene-1-carboxylate (SEPHCHC). The protein is 2-succinyl-5-enolpyruvyl-6-hydroxy-3-cyclohexene-1-carboxylate synthase of Saccharopolyspora erythraea (strain ATCC 11635 / DSM 40517 / JCM 4748 / NBRC 13426 / NCIMB 8594 / NRRL 2338).